Reading from the N-terminus, the 265-residue chain is Putative hydro-lyase PA14_37210 (265 aa).

This sequence belongs to the D-glutamate cyclase family.

The sequence is that of Putative hydro-lyase PA14_37210 from Pseudomonas aeruginosa (strain UCBPP-PA14).